The following is a 463-amino-acid chain: Glutamate--tRNA ligase (463 aa).

A 'HIGH' region motif is present at residues 10–20; that stretch reads PSPTGHLHIGG. The 'KMSKS' region signature appears at 236–240; that stretch reads KLSKR. Lysine 239 is an ATP binding site.

Belongs to the class-I aminoacyl-tRNA synthetase family. Glutamate--tRNA ligase type 1 subfamily. As to quaternary structure, monomer.

The protein resides in the cytoplasm. It carries out the reaction tRNA(Glu) + L-glutamate + ATP = L-glutamyl-tRNA(Glu) + AMP + diphosphate. In terms of biological role, catalyzes the attachment of glutamate to tRNA(Glu) in a two-step reaction: glutamate is first activated by ATP to form Glu-AMP and then transferred to the acceptor end of tRNA(Glu). The sequence is that of Glutamate--tRNA ligase from Nitratidesulfovibrio vulgaris (strain DP4) (Desulfovibrio vulgaris).